Here is a 74-residue protein sequence, read N- to C-terminus: U3-agatoxin-Ao1h (74 aa).

An N-terminal signal peptide occupies residues 1 to 20; it reads MRAIISLLLISTMVFGVIEA. The propeptide occupies 21–34; sequence VSVQKSLKIFEGER. Cystine bridges form between C37/C53, C44/C58, C52/C68, and C60/C66. N72 carries the post-translational modification Asparagine amide.

It belongs to the neurotoxin 07 (Beta/delta-agtx) family. 03 (aga-4) subfamily. Aga sub-subfamily. In terms of tissue distribution, expressed by the venom gland.

The protein localises to the secreted. Insecticidal neurotoxin that induces an irreversible spastic paralysis when injected into insects. Modifies presynaptic voltage-gated sodium channels (Nav), causing them to open at the normal resting potential of the nerve. This leads to spontaneous release of neurotransmitter and repetitive action potentials in motor neurons. This Agelena orientalis (Funnel-web spider) protein is U3-agatoxin-Ao1h.